We begin with the raw amino-acid sequence, 272 residues long: Ribosomal RNA small subunit methyltransferase A (272 aa).

Residues Asn18, Leu20, Gly45, Glu66, Asp91, and Asn113 each contribute to the S-adenosyl-L-methionine site.

This sequence belongs to the class I-like SAM-binding methyltransferase superfamily. rRNA adenine N(6)-methyltransferase family. RsmA subfamily.

Its subcellular location is the cytoplasm. It catalyses the reaction adenosine(1518)/adenosine(1519) in 16S rRNA + 4 S-adenosyl-L-methionine = N(6)-dimethyladenosine(1518)/N(6)-dimethyladenosine(1519) in 16S rRNA + 4 S-adenosyl-L-homocysteine + 4 H(+). Specifically dimethylates two adjacent adenosines (A1518 and A1519) in the loop of a conserved hairpin near the 3'-end of 16S rRNA in the 30S particle. May play a critical role in biogenesis of 30S subunits. The chain is Ribosomal RNA small subunit methyltransferase A from Photorhabdus laumondii subsp. laumondii (strain DSM 15139 / CIP 105565 / TT01) (Photorhabdus luminescens subsp. laumondii).